The chain runs to 2161 residues: DNA polymerase epsilon catalytic subunit A (2161 aa).

3 consecutive short sequence motifs (nuclear localization signal) follow at residues 5 to 12, 1137 to 1144, and 1239 to 1246; these read NRRRDRKD, HKKVREKD, and LKKRKWKV. Residues C2038, C2041, C2063, and C2068 each contribute to the Zn(2+) site. The segment at 2038–2068 adopts a CysA-type zinc-finger fold; that stretch reads CSNCDAYRDLDICRDPALLTEKEWSCADTQC. The [4Fe-4S] cluster site is built by C2099, C2102, C2114, and C2116. The CysB motif signature appears at 2099-2116; it reads CIRCNQVKAAHLTEQCEC. Positions 2130-2137 match the Nuclear localization signal 4 motif; that stretch reads SKRMEIFM.

This sequence belongs to the DNA polymerase type-B family. As to quaternary structure, heterotetramer. Subunit of the DNA polymerase II. Interacts (via C-terminus) with DPB2. Interacts with LHP1/TFL2. Requires [4Fe-4S] cluster as cofactor. As to expression, mostly expressed at low levels in inflorescence (floral meristem and flowers until anthesis), and, to a lower extent, in roots, seeds and leaves.

Its subcellular location is the nucleus. It carries out the reaction DNA(n) + a 2'-deoxyribonucleoside 5'-triphosphate = DNA(n+1) + diphosphate. In terms of biological role, DNA polymerase II, which participates in chromosomal DNA replication. Required for the timing and determination of cell fate during plant embryogenesis and root pole development, by promoting cell cycle and cell type patterning. Necessary for proper shoot (SAM) and root apical meristem (RAM) functions. Involved in maintaining epigenetic states, controlling hypersensitive response (HR), and mediating abscisic acid (ABA) signaling. Required for flowering repression through a mechanism involving epigenetic gene silencing. May participate in processes involved in chromatin-mediated cellular memory. The chain is DNA polymerase epsilon catalytic subunit A (POL2A) from Arabidopsis thaliana (Mouse-ear cress).